The following is a 313-amino-acid chain: WD repeat-containing protein 82 (313 aa).

WD repeat units lie at residues Glu-19 to Thr-58, Gly-105 to Leu-144, His-146 to Phe-184, Asp-192 to Thr-231, Ala-236 to Val-276, and Lys-280 to Asp-313.

Belongs to the WD repeat SWD2 family. In terms of assembly, component of the SET1/COMPASS complex, at least composed of the catalytic subunit (SETD1A or SETD1B), WDR5, WDR82, RBBP5, ASH2L/ASH2, CXXC1/CFP1, HCFC1 and DPY30. Component of the PNUTS-PP1 phosphatase complex, composed of PPP1R10/PNUTS, TOX4, WDR82, and PPP1CA or PPP1CB or PPP1CC. Associated with multiple protein complexes including an RNA polymerase II complex, MLL3/MLL4 complex and a chaperonin-containing TCP1 complex. Interacts with SETD1B (via N-terminal region); the interaction is direct. Interacts with SETD1A (via N-terminal region); the interaction is direct. Interacts with CUL4B. Interacts with RBBP5. Interacts with POLR2B. Interacts with hyperphosphorylated C-terminal domain (CTD) of RNA polymerase II large subunit (POLR2A). Binds specifically to CTD heptad repeats phosphorylated on 'Ser-5' of each heptad. SETD1A enhances its interaction with POLR2A. Interacts with PPP1R10/PNUTS. Interacts with PPP1CA in the presence of PPP1R10/PNUTS. Interacts with ZC3H4; interaction is independent of the SET1 complex and promotes transcription termination of long non-coding RNAs (lncRNAs).

It is found in the nucleus. Its subcellular location is the chromosome. The protein resides in the cytoplasm. Regulatory component of the SET1/COMPASS complex implicated in the tethering of this complex to transcriptional start sites of active genes. Facilitates histone H3 'Lys-4' methylation (H3K4me) via recruitment of the SETD1A or SETD1B to the 'Ser-5' phosphorylated C-terminal domain (CTD) of RNA polymerase II large subunit (POLR2A). Component of the PNUTS-PP1 protein phosphatase complex, a protein phosphatase 1 (PP1) complex that promotes RNA polymerase II transcription pause-release, allowing transcription elongation. PNUTS-PP1 also plays a role in the control of chromatin structure and cell cycle progression during the transition from mitosis into interphase. Together with ZC3H4, but independently of the SET1 complex, part of a transcription termination checkpoint that promotes transcription termination of long non-coding RNAs (lncRNAs). The transcription termination checkpoint is activated by the inefficiently spliced first exon of lncRNAs and promotes transcription termination of lncRNAs and their subsequent degradation by the exosome. The sequence is that of WD repeat-containing protein 82 from Homo sapiens (Human).